A 401-amino-acid polypeptide reads, in one-letter code: Rho-N domain-containing protein 1, chloroplastic (401 aa).

A chloroplast-targeting transit peptide spans Met1 to Arg63. Disordered stretches follow at residues Pro73 to Arg129 and Lys180 to Val361. Composition is skewed to polar residues over residues Asp102–Pro126, Thr210–Ala223, and Pro240–Thr265. Basic and acidic residues predominate over residues Gln266 to Glu290. The segment covering Leu339–Glu358 has biased composition (acidic residues). A coiled-coil region spans residues Leu339–Glu371.

In terms of assembly, homodimer or homomultimer. Part of a chloroplastic degradosome-like complex. Interacts with RNE.

Its subcellular location is the plastid. The protein localises to the chloroplast. Binds to and supports processing of specific plastid RNAs. Associates via its C-terminal Rho-N domain to single stranded regions of 16S and 23S rRNAs or to rbcL mRNAs. May be involved in targeting transcripts to RNases such as RNE or RNase J. The chain is Rho-N domain-containing protein 1, chloroplastic (RHON1) from Arabidopsis thaliana (Mouse-ear cress).